Consider the following 130-residue polypeptide: Large ribosomal subunit protein eL32 (130 aa).

Belongs to the eukaryotic ribosomal protein eL32 family.

The protein is Large ribosomal subunit protein eL32 (rpl32e) of Pyrococcus abyssi (strain GE5 / Orsay).